A 368-amino-acid chain; its full sequence is Agmatine deiminase (368 aa).

Residue C357 is the Amidino-cysteine intermediate of the active site.

The protein belongs to the agmatine deiminase family. As to quaternary structure, homodimer.

It catalyses the reaction agmatine + H2O = N-carbamoylputrescine + NH4(+). It participates in amine and polyamine biosynthesis; putrescine biosynthesis via agmatine pathway; N-carbamoylputrescine from agmatine: step 1/1. Its function is as follows. Mediates the hydrolysis of agmatine into N-carbamoylputrescine in the arginine decarboxylase (ADC) pathway of putrescine biosynthesis, a basic polyamine. The protein is Agmatine deiminase of Pseudomonas putida (strain ATCC 47054 / DSM 6125 / CFBP 8728 / NCIMB 11950 / KT2440).